Reading from the N-terminus, the 1384-residue chain is Enhancer of mRNA-decapping protein 4 (1384 aa).

4 WD repeats span residues 171-211 (GFTG…SKIQ), 227-274 (NSNR…SNNS), 292-331 (GHAA…QDQP), and 340-390 (HNGQ…CLQT). Disordered stretches follow at residues 471–494 (TEVL…TSES), 551–584 (AMSS…SPAP), and 796–931 (AGAA…MSTE). Over residues 482 to 494 (SMTAEGNQGTSES) the composition is skewed to polar residues. A compositionally biased stretch (basic and acidic residues) spans 834 to 844 (CSREEIKDRHI). Polar residues-rich tracts occupy residues 854–866 (HLTQ…ASAE) and 918–931 (SSQS…MSTE). A coiled-coil region spans residues 930–1012 (TEVQDELLQM…QQLQDQLVQQ (83 aa)).

The protein belongs to the WD repeat EDC4 family.

The protein resides in the cytoplasm. The protein localises to the P-body. Its subcellular location is the nucleus. Functionally, in the process of mRNA degradation, seems to play a role in mRNA decapping. The polypeptide is Enhancer of mRNA-decapping protein 4 (edc4) (Danio rerio (Zebrafish)).